We begin with the raw amino-acid sequence, 24 residues long: Alpha-lactalbumin (24 aa).

Belongs to the glycosyl hydrolase 22 family. As to quaternary structure, lactose synthase (LS) is a heterodimer of a catalytic component, beta1,4-galactosyltransferase (beta4Gal-T1) and a regulatory component, alpha-lactalbumin (LA). Glycosylated (50% of the proteins). Mammary gland specific. Secreted in milk.

Its subcellular location is the secreted. Its function is as follows. Regulatory subunit of lactose synthase, changes the substrate specificity of galactosyltransferase in the mammary gland making glucose a good acceptor substrate for this enzyme. This enables LS to synthesize lactose, the major carbohydrate component of milk. In other tissues, galactosyltransferase transfers galactose onto the N-acetylglucosamine of the oligosaccharide chains in glycoproteins. This Felis catus (Cat) protein is Alpha-lactalbumin (LALBA).